The sequence spans 247 residues: MTEHPRLAKAWCAKVITLFPETFPGVLGASLTGKALQKGLWALEPIDLRTFGTGKHRQVDDTPAGGGAGLVLKPDVMARALDIAARGTPADRADWPIVYLSPRGKPFEQRDAERFASAKGITLVCGRFEGVDQRVIDAYGMEEICVGDAVLTGGEIAAQLVLDATTRLIPGVLGNADSTQEESFSDGLLEHPQYTKPADWRGHTIPPVLLSGDHGKVAEWRKAQAEALTQERRPDLWVKVAKPKKPR.

Glycine 126 contributes to the S-adenosyl-L-methionine binding site.

The protein belongs to the RNA methyltransferase TrmD family. Homodimer.

Its subcellular location is the cytoplasm. The catalysed reaction is guanosine(37) in tRNA + S-adenosyl-L-methionine = N(1)-methylguanosine(37) in tRNA + S-adenosyl-L-homocysteine + H(+). In terms of biological role, specifically methylates guanosine-37 in various tRNAs. The sequence is that of tRNA (guanine-N(1)-)-methyltransferase from Jannaschia sp. (strain CCS1).